Reading from the N-terminus, the 247-residue chain is tRNA uridine(34) hydroxylase (247 aa).

Residues 124–218 (TQQDVIVIDT…YLEDTQNKNN (95 aa)) form the Rhodanese domain. C178 serves as the catalytic Cysteine persulfide intermediate.

It belongs to the TrhO family.

The enzyme catalyses uridine(34) in tRNA + AH2 + O2 = 5-hydroxyuridine(34) in tRNA + A + H2O. Functionally, catalyzes oxygen-dependent 5-hydroxyuridine (ho5U) modification at position 34 in tRNAs. This chain is tRNA uridine(34) hydroxylase, found in Rickettsia conorii (strain ATCC VR-613 / Malish 7).